Reading from the N-terminus, the 246-residue chain is Ubiquitin-conjugating enzyme E2 6 (246 aa).

The Cytoplasmic portion of the chain corresponds to 1–224; sequence MATKQAQKRL…LEKQHNDKPN (224 aa). One can recognise a UBC core domain in the interval 5 to 154; that stretch reads QAQKRLTKEY…FNSTRFKLVF (150 aa). The active-site Glycyl thioester intermediate is the C87. The helical transmembrane segment at 225-245 threads the bilayer; sequence GSSSMFYIGVALFLFLVGLFM.

It belongs to the ubiquitin-conjugating enzyme family.

It is found in the endoplasmic reticulum membrane. The enzyme catalyses S-ubiquitinyl-[E1 ubiquitin-activating enzyme]-L-cysteine + [E2 ubiquitin-conjugating enzyme]-L-cysteine = [E1 ubiquitin-activating enzyme]-L-cysteine + S-ubiquitinyl-[E2 ubiquitin-conjugating enzyme]-L-cysteine.. Its pathway is protein modification; protein ubiquitination. In terms of biological role, catalyzes the covalent attachment of ubiquitin to other proteins. Functions in degradation of misfolded or regulated proteins localized in the endoplasmic reticulum (ER) lumen or membrane via the ubiquitin-proteasome system. Cognate E2 conjugating enzyme for the DOA10 ubiquitin ligase complex, which is part of the ERAD-C pathway responsible for the rapid degradation of membrane proteins with misfolded cytoplasmic domains. In Candida glabrata (strain ATCC 2001 / BCRC 20586 / JCM 3761 / NBRC 0622 / NRRL Y-65 / CBS 138) (Yeast), this protein is Ubiquitin-conjugating enzyme E2 6 (UBC6).